We begin with the raw amino-acid sequence, 47 residues long: Lysis protein for colicin E8 (47 aa).

An N-terminal signal peptide occupies residues 1 to 19; it reads MKKITGIILLLLAVIILAA. C20 is lipidated: N-palmitoyl cysteine. A lipid anchor (S-diacylglycerol cysteine) is attached at C20.

It is found in the cell outer membrane. Its function is as follows. Lysis proteins are required for both colicin release and partial cell lysis. In Escherichia coli, this protein is Lysis protein for colicin E8 (lys).